The primary structure comprises 1529 residues: MIIEERKSHELNLESIDNDLRLESVRQNAEKLGWDHFARSVRRNLQEKHHTLEASIRLDVLGSLAFMKAHLPIDKDESLNRKIQSLADGLGENCVVAAHIGGISIKSHDVSVDIGIAEEAIVSCKIGYFGQPLFDAPEALALLKSDEFSKLRDSIAEVLSLIPKEISLSDKNACKDALRALEHVLIRDAADSSFSAINNNKYGFYSPRNELRPGRLYYIAEPMLIRVAEKEGKMHADNSHLDSLPYIEIFFVKSNKKSKLPVFNQSGEWTTFNDAKVCICIRFKHAFLFSQHTIRKLAKTVPKSPVVRSYVNFYRYATGRPTVKKNLELLTQFPNETDIQQHYNVDSSKLASDSDSLVVEMFLGDLRELPKLIETLRSEWMHASLWESIVAMCEPNQDAVKKEVRAANLELLLRRNEFNLKFDTEFGNMSMQISEKEPRRYFIRTVSQLTGDTPSSDLDNLLTEKLNSTWSIPISLTFALSTLNCRLNSLLSPLNYVKPSNPFDSDKRQQWWLGANKTHTNITVEKVKKRIVLEIGPVIEPKELVYTRQEDEELCGSLLSSFGEVDQYYVQTSTIGKTGPQPRPKREPSQLASMGMMSAELDMARNRQSMEHAMHPRPQDLRELSNLESARIQMRQSIGAAHAVGLASHQSFTSPGPMRHHPYMGGSYDSPGFYGPNIPASVPFPDAAAFGKGKQRKPRAKKQPGEEVAAPSGRGKGRKGRGAAAVGAGSGRKSSGVVGENQYGMDQMRPQLQRSYSDFQNPMNPQHMPQYAQHMQHMQQMHQMQNMQQYQQMQQYQQNQQYQQNQQYRMHMQQQQLQQQQMQSPQQQSGMNTPKSQRLTDEDSDEDVDPPRLPKPQVSAAVSRPSLPPPHQLGNPMVGYPGMPLQSPNHLPLTPSPLSAPPKPFSPEQHHFGTKMRDNAYWKEAERNIDVKPDIEKLKQQMAASSSCGPVLGTAATSSSSDPSTSGESSNATESASSAPLMKPPTTAQTPKKKLGLEATLSKLRGVQEQALQKQEQQRIQQQDSVDSTNSEQPTPQPQFSQQPGPPLAPNQVNRVMNMSNAFDDEAGSSTNTSDIKPSLASLQKSTGSIVVDPTTPGTSSNIAQPSGVMPSLKKEVEEQPPEREKEKLIVKIPKILKVDDRRDERREKERDRDRDRDRDGDRERDRYEKEDKSQREKDKKERDKERKRRDRDRTEAKKEKDSSGTREKESKKRKREKSEEKDKREPDRKKEKKEGKELSKTTTKSVLPMIPTRTLKNFRIPKKDTVDEDKKEPKDESIPGPSTSSESSTRKEVAPAPISRKESTTSSVAPLQRKESFTSQSGAFPPSEYHREPPKKKPPPISGPAQGSYSGSSNAGPISSSSRGSGNGGSRKPPVLPPPALPMRGPPSDQMYRERTGSMRGFPPSSHYHGSGGSGGSKQVASYAQGLPPGMGPPAAKPHGNSYQASQWVRPPTHRDSHSYHGMPTLGPPQISQREQPPPPPQMIPLPKENPPPPLAPPSRPHRDSRARGGGDNGPDSPEEGTLRIDDE.

Disordered stretches follow at residues 685-740 (PDAA…VVGE), 807-919 (QYRM…MRDN), and 933-1529 (PDIE…IDDE). Residues 693–702 (GKQRKPRAKK) are compositionally biased toward basic residues. Low complexity-rich tracts occupy residues 722-739 (GAAA…GVVG) and 807-828 (QYRM…PQQQ). Positions 894 to 905 (TPSPLSAPPKPF) are enriched in pro residues. Over residues 908–919 (EQHHFGTKMRDN) the composition is skewed to basic and acidic residues. Low complexity-rich tracts occupy residues 958–990 (SSSS…TAQT) and 1008–1023 (QEQA…IQQQ). Residues 1008-1032 (QEQALQKQEQQRIQQQDSVDSTNSE) adopt a coiled-coil conformation. 3 stretches are compositionally biased toward polar residues: residues 1051–1061 (NQVNRVMNMSN), 1068–1089 (GSST…STGS), and 1096–1105 (TPGTSSNIAQ). Basic and acidic residues-rich tracts occupy residues 1113-1130 (LKKE…EKLI), 1137-1185 (LKVD…ERDK), 1192-1240 (RDRT…KELS), and 1262-1278 (PKKD…KDES). Positions 1169 to 1202 (EKEDKSQREKDKKERDKERKRRDRDRTEAKKEKD) form a coiled coil. Residues 1279–1288 (IPGPSTSSES) are compositionally biased toward low complexity. Residues 1289 to 1304 (STRKEVAPAPISRKES) are compositionally biased toward basic and acidic residues. Low complexity predominate over residues 1349–1365 (SYSGSSNAGPISSSSRG). Pro residues-rich tracts occupy residues 1375-1386 (PVLPPPALPMRG) and 1477-1500 (QPPP…APPS).

The protein belongs to the Mediator complex subunit 1 family. As to quaternary structure, component of the Mediator complex.

It is found in the nucleus. Functionally, component of the Mediator complex, a coactivator involved in the regulated transcription of nearly all RNA polymerase II-dependent genes. Mediator functions as a bridge to convey information from gene-specific regulatory proteins to the basal RNA polymerase II transcription machinery. Mediator is recruited to promoters by direct interactions with regulatory proteins and serves as a scaffold for the assembly of a functional preinitiation complex with RNA polymerase II and the general transcription factors. The sequence is that of Mediator of RNA polymerase II transcription subunit 1.1 (sop-3) from Caenorhabditis briggsae.